The following is a 118-amino-acid chain: Na(+)/H(+) antiporter subunit G1 (118 aa).

3 helical membrane-spanning segments follow: residues 9–29 (IALI…IGIL), 41–61 (AGKA…LFFI), and 70–90 (QLIV…HLII).

It belongs to the CPA3 antiporters (TC 2.A.63) subunit G family. May form a heterooligomeric complex that consists of seven subunits: mnhA1, mnhB1, mnhC1, mnhD1, mnhE1, mnhF1 and mnhG1.

The protein localises to the cell membrane. Its function is as follows. Mnh complex is a Na(+)/H(+) antiporter involved in Na(+) excretion. In Staphylococcus saprophyticus subsp. saprophyticus (strain ATCC 15305 / DSM 20229 / NCIMB 8711 / NCTC 7292 / S-41), this protein is Na(+)/H(+) antiporter subunit G1 (mnhG1).